A 235-amino-acid polypeptide reads, in one-letter code: Ribonuclease PH (235 aa).

Phosphate is bound by residues arginine 86 and 124 to 126 (GTR).

The protein belongs to the RNase PH family. As to quaternary structure, homohexameric ring arranged as a trimer of dimers.

It carries out the reaction tRNA(n+1) + phosphate = tRNA(n) + a ribonucleoside 5'-diphosphate. Phosphorolytic 3'-5' exoribonuclease that plays an important role in tRNA 3'-end maturation. Removes nucleotide residues following the 3'-CCA terminus of tRNAs; can also add nucleotides to the ends of RNA molecules by using nucleoside diphosphates as substrates, but this may not be physiologically important. Probably plays a role in initiation of 16S rRNA degradation (leading to ribosome degradation) during starvation. This Francisella tularensis subsp. novicida (strain U112) protein is Ribonuclease PH.